Consider the following 333-residue polypeptide: Ferrochelatase (333 aa).

Fe cation-binding residues include His202 and Glu284.

The protein belongs to the ferrochelatase family.

It is found in the cytoplasm. It catalyses the reaction heme b + 2 H(+) = protoporphyrin IX + Fe(2+). Its pathway is porphyrin-containing compound metabolism; protoheme biosynthesis; protoheme from protoporphyrin-IX: step 1/1. In terms of biological role, catalyzes the ferrous insertion into protoporphyrin IX. This is Ferrochelatase from Francisella tularensis subsp. holarctica (strain LVS).